Consider the following 346-residue polypeptide: uncharacterized protein (346 aa).

The tract at residues 10 to 109 is disordered; the sequence is WDFIMTDPSS…SNSNGNNSPV (100 aa). Positions 26 to 44 are enriched in low complexity; sequence KGSSKNGSPKTSSPKSGSP. Residues 56–67 are compositionally biased toward polar residues; the sequence is NQQLLQNDSINL. Residues 94–109 are compositionally biased toward low complexity; sequence KSSVVPSNSNGNNSPV.

This is an uncharacterized protein from Dictyostelium discoideum (Social amoeba).